Consider the following 500-residue polypeptide: Nuclear distribution protein PAC1 (500 aa).

WD repeat units lie at residues 125 to 164 (HNGHPVTAIDIHPFQPIMATASQDGTIVIWNLLNLTEPQQ), 169 to 219 (AHTR…NLKA), 225 to 265 (GHEN…IVLS), 268 to 310 (GHSN…LMIG), 338 to 378 (QNEL…IRSD), 397 to 436 (EHKSWVKDIAIHPNSRFIISVGDDRKINIWDLGLLLESNL), and 459 to 500 (IKDQ…EYIL).

This sequence belongs to the WD repeat LIS1/nudF family. In terms of assembly, self-associates. Interacts with NDL1 and dynein.

The protein localises to the cytoplasm. The protein resides in the cytoskeleton. Its subcellular location is the spindle pole. Functionally, positively regulates the activity of the minus-end directed microtubule motor protein dynein. Plays a central role in positioning the mitotic spindle at the bud neck during cell division. Targets cytoplasmic dynein to microtubule plus ends, thereby promoting dynein-mediated microtubule sliding along the bud cortex and consequently the movement of the mitotic spindle to the bud neck. This Komagataella phaffii (strain GS115 / ATCC 20864) (Yeast) protein is Nuclear distribution protein PAC1.